The primary structure comprises 67 residues: MNFQLDLIKDKVEFFEAASLQELEKKINTQIENNKAIMLRVKSVSHQTLVAEGRILYSAVVHFSAEA.

Residues 17–47 (AASLQELEKKINTQIENNKAIMLRVKSVSHQ) adopt a coiled-coil conformation.

This is an uncharacterized protein from Bacillus subtilis (strain 168).